We begin with the raw amino-acid sequence, 237 residues long: GATA zinc finger domain-containing protein 18 (237 aa).

Composition is skewed to low complexity over residues 1-28 (MAHNNNNNINNNNNNNNNNNNNNNKNNN) and 87-118 (NTSTNTTTTTTTTTTTTTTSSPNNNVITPNSN). 3 disordered regions span residues 1 to 31 (MAHNNNNNINNNNNNNNNNNNNNNKNNNSEY), 78 to 119 (PTNT…NSNL), and 140 to 186 (FEEG…GGCS). Residues 140–151 (FEEGDDEEETSS) are compositionally biased toward acidic residues. Residues 152–167 (DSDSSSSSSTSSSSSE) are compositionally biased toward low complexity. The GATA-type zinc finger occupies 185–212 (CSICKTQETPYWRKGKDGDKTVYLCNAC).

The protein is GATA zinc finger domain-containing protein 18 (gtaR) of Dictyostelium discoideum (Social amoeba).